Reading from the N-terminus, the 327-residue chain is Phenylalanine--tRNA ligase alpha subunit (327 aa).

Glutamate 252 contacts Mg(2+).

This sequence belongs to the class-II aminoacyl-tRNA synthetase family. Phe-tRNA synthetase alpha subunit type 1 subfamily. In terms of assembly, tetramer of two alpha and two beta subunits. Mg(2+) is required as a cofactor.

The protein localises to the cytoplasm. It catalyses the reaction tRNA(Phe) + L-phenylalanine + ATP = L-phenylalanyl-tRNA(Phe) + AMP + diphosphate + H(+). The protein is Phenylalanine--tRNA ligase alpha subunit of Cronobacter sakazakii (strain ATCC BAA-894) (Enterobacter sakazakii).